The sequence spans 28 residues: Dermaseptin-SP1 (28 aa).

Expressed by the skin glands.

The protein resides in the secreted. Its function is as follows. Probable antimicrobial peptide which stimulates insulin-release in glucose-responsive BRIN-BD 11 cells. This is Dermaseptin-SP1 from Agalychnis spurrelli (Gliding leaf frog).